The sequence spans 422 residues: Cell division protein DivIB (422 aa).

Basic and acidic residues-rich tracts occupy residues 1-23 (MVDW…KQEE) and 62-75 (EEAK…DQEQ). Residues 1 to 77 (MVDWDKEAQR…DFAKDQEQKH (77 aa)) form a disordered region. Residues 1-109 (MVDWDKEAQR…LQLKSVSWSR (109 aa)) are Cytoplasmic-facing. A helical transmembrane segment spans residues 110–130 (LILAAAFLFMIIFSAFWLSPL). Residues 131–202 (NRIATIEVSG…RTVEVNVQEF (72 aa)) form the POTRA domain. Residues 131 to 422 (NRIATIEVSG…TVTQTRSSNS (292 aa)) lie on the Extracellular side of the membrane. Positions 329–422 (NPLNDPFASP…TVTQTRSSNS (94 aa)) are disordered. Residues 338–379 (PEEKASYQEKVDQAKEKSKEKQAKADKHSSESKLGDKPKPRG) are compositionally biased toward basic and acidic residues. Residues 389–422 (TSSQRQTSSQSSPRPGTNSSQQSSTVTQTRSSNS) are compositionally biased toward low complexity.

The protein belongs to the FtsQ/DivIB family. DivIB subfamily.

The protein resides in the cell membrane. Functionally, cell division protein that may be involved in stabilizing or promoting the assembly of the division complex. The chain is Cell division protein DivIB from Aerococcus urinae (strain CCUG 59500 / ACS-120-V-Col10a).